The following is a 364-amino-acid chain: Aminomethyltransferase (364 aa).

This sequence belongs to the GcvT family. In terms of assembly, the glycine cleavage system is composed of four proteins: P, T, L and H.

It catalyses the reaction N(6)-[(R)-S(8)-aminomethyldihydrolipoyl]-L-lysyl-[protein] + (6S)-5,6,7,8-tetrahydrofolate = N(6)-[(R)-dihydrolipoyl]-L-lysyl-[protein] + (6R)-5,10-methylene-5,6,7,8-tetrahydrofolate + NH4(+). In terms of biological role, the glycine cleavage system catalyzes the degradation of glycine. The polypeptide is Aminomethyltransferase (Escherichia coli (strain 55989 / EAEC)).